Consider the following 30-residue polypeptide: Natriuretic peptides A (30 aa).

Residues alanine 1–arginine 3 constitute a propeptide that is removed on maturation. Cysteines 11 and 27 form a disulfide.

Belongs to the natriuretic peptide family. Cleaved upon secretion to produce the functional hormone.

Its subcellular location is the secreted. Its function is as follows. Hormone playing a key role in cardiovascular homeostasis through regulation of natriuresis, diuresis, and vasodilation. Has a cGMP-stimulating activity. The sequence is that of Natriuretic peptides A from Pelophylax ridibundus (Marsh frog).